The primary structure comprises 190 residues: NADH-quinone oxidoreductase subunit B (190 aa).

[4Fe-4S] cluster is bound by residues cysteine 69, cysteine 70, cysteine 134, and cysteine 164.

This sequence belongs to the complex I 20 kDa subunit family. NDH-1 is composed of 14 different subunits. Subunits NuoB, C, D, E, F, and G constitute the peripheral sector of the complex. [4Fe-4S] cluster serves as cofactor.

It localises to the cell inner membrane. It carries out the reaction a quinone + NADH + 5 H(+)(in) = a quinol + NAD(+) + 4 H(+)(out). NDH-1 shuttles electrons from NADH, via FMN and iron-sulfur (Fe-S) centers, to quinones in the respiratory chain. Couples the redox reaction to proton translocation (for every two electrons transferred, four hydrogen ions are translocated across the cytoplasmic membrane), and thus conserves the redox energy in a proton gradient. In Hyphomonas neptunium (strain ATCC 15444), this protein is NADH-quinone oxidoreductase subunit B.